The primary structure comprises 911 residues: MLASLIGGIFGTKNERELKRMRKIVEQINALEPTISALSDADLSAKTPEFKQRYNNGESLDKLLPEAFAVCREAAKRVMGMRHYDVQLIGGITLHEGKIAEMRTGEGKTLMGTLACYLNALSGEGVHVITVNDYLAQRDAELNRPLFEFLGLSIGTIYSMQEPAEKAAAYLADITYGTNNEFGFDYLRDNMVFSLAEKKQRGLHYAIIDEVDSILIDEARTPLIISGQSEDSSHLYTAINTIPPKLRPQKEEKVADGGHFWIDEKQRSVEMTEIGYETVEQELIQMGLLAEGESLYSATNLNLVHHVSAAIRAHVLFQRDVHYIIHDGEVVIVDEHTGRTMPGRRWSEGLHQAVEAKEGLAIQPENQTLATTTFQNYFRPYKKLSGMTGTADTEAAEMKEIYGLDVVIIPTHRPMIRNDQNDLIYLNRNGKYNAIIQEIMNIRQQGVAPILIGTATIEASEILSSKLKQAGIHHEVLNAKQHEREADIIAQAGSPNAVTIATNMAGRGTDIILGGNWKAKLAKLENPTPEDEARLKAQWEQDHEDVLQAGGLHIIGSERHESRRIDNQLRGRAGRQGDPGVSRFYLSLEDDLMRIFAGDRVVAMMRAMGLKEDEAIEHKMVSRSIENAQRKVEARNFDIRKNLLKYDDVNNEQRKIIYSQRDEILAENTLQEYVEEMHREVMQAMIANFIPPESIHDQWDVEGLENALRIDLGIELPVQEWLEQDRRLDEEGLVERISDEVIARYRQRRAQMGDESAAMLERHFVLNSLDRHWKDHLAAMDYLRQGIHLRGYAQKNPEQEYKKESFNLFVNMLGVIKTDVVTDLVTDLSRVHIPTPEELAEMEAQQQQQAEAMKLSFEHDDVDGLTGEVTASQEALNESATEQQTFPVPESRNAPCPCGSGLKYKQCHGKI.

ATP is bound by residues Gln87, Gly105 to Thr109, and Asp510. Zn(2+)-binding residues include Cys896, Cys898, Cys907, and His908.

The protein belongs to the SecA family. As to quaternary structure, monomer and homodimer. Part of the essential Sec protein translocation apparatus which comprises SecA, SecYEG and auxiliary proteins SecDF-YajC and YidC. The cofactor is Zn(2+).

Its subcellular location is the cell inner membrane. It is found in the cytoplasm. It carries out the reaction ATP + H2O + cellular proteinSide 1 = ADP + phosphate + cellular proteinSide 2.. Its function is as follows. Part of the Sec protein translocase complex. Interacts with the SecYEG preprotein conducting channel. Has a central role in coupling the hydrolysis of ATP to the transfer of proteins into and across the cell membrane, serving both as a receptor for the preprotein-SecB complex and as an ATP-driven molecular motor driving the stepwise translocation of polypeptide chains across the membrane. The chain is Protein translocase subunit SecA from Acinetobacter baumannii (strain SDF).